Consider the following 1309-residue polypeptide: Clustered mitochondria protein homolog (1309 aa).

The disordered stretch occupies residues 1-34 (MLLNGDCPESLKKEAAAAEPPRENGLDEAGPGDE). Positions 9–25 (ESLKKEAAAAEPPRENG) are enriched in basic and acidic residues. Phosphoserine is present on residues S279 and S281. The Clu domain occupies 335-577 (RAEDAYTSRL…RTFPPDLNFL (243 aa)). A compositionally biased stretch (polar residues) spans 636-651 (LETPSSLENGGPSSLE). A disordered region spans residues 636–674 (LETPSSLENGGPSSLESKSEDPPGQEAGSEEEGSSASGL). 3 positions are modified to phosphoserine: S654, S664, and S723. TPR repeat units follow at residues 978 to 1011 (AFHF…FNNV), 1020 to 1053 (CACL…SERV), 1104 to 1137 (ALLD…STKY), and 1146 to 1179 (ALSH…YKTQ). Positions 1264-1278 (HQLQEASRNRDRAEE) are enriched in basic and acidic residues. The disordered stretch occupies residues 1264 to 1309 (HQLQEASRNRDRAEEPMATEPAPAGAPGDLGSQPPAAKDPSPSVQG). Over residues 1279 to 1290 (PMATEPAPAGAP) the composition is skewed to low complexity.

Belongs to the CLU family.

It is found in the cytoplasm. It localises to the cytoplasmic granule. Its function is as follows. mRNA-binding protein involved in proper cytoplasmic distribution of mitochondria. Specifically binds mRNAs of nuclear-encoded mitochondrial proteins in the cytoplasm and regulates transport or translation of these transcripts close to mitochondria, playing a role in mitochondrial biogenesis. The polypeptide is Clustered mitochondria protein homolog (CLUH) (Homo sapiens (Human)).